We begin with the raw amino-acid sequence, 217 residues long: MATEDREMMEGRGAGESCPTFPKMAPDDPMSEGKPRASLPQEADTPKPDSSYDYLEEMETCEDGGCPGPPKVLSSKAGPATTKGQAGDGLELAELPSVPATAAPGSPVRERDAEMELEKVRMEFELKRLKYLHEENERQRQHEEVMEQLQQQATPRLFSGGLQDLLLPQNQFAMFLYCFIFIHIIYVTKEMIFFLFSKHYLFCIAAILLCLIKTLWS.

The segment covering 1–10 (MATEDREMME) has biased composition (basic and acidic residues). Residues 1-87 (MATEDREMME…GPATTKGQAG (87 aa)) form a disordered region. Positions 109–154 (RERDAEMELEKVRMEFELKRLKYLHEENERQRQHEEVMEQLQQQAT) form a coiled coil. The next 2 membrane-spanning stretches (helical) occupy residues 165–185 (LLLP…IHII) and 192–212 (IFFL…LCLI).

Its subcellular location is the membrane. The chain is Transmembrane protein 247 from Bos taurus (Bovine).